A 187-amino-acid chain; its full sequence is Ribose 1,5-bisphosphate phosphokinase PhnN (187 aa).

G9–D16 contacts ATP.

It belongs to the ribose 1,5-bisphosphokinase family.

The enzyme catalyses alpha-D-ribose 1,5-bisphosphate + ATP = 5-phospho-alpha-D-ribose 1-diphosphate + ADP. The protein operates within metabolic intermediate biosynthesis; 5-phospho-alpha-D-ribose 1-diphosphate biosynthesis; 5-phospho-alpha-D-ribose 1-diphosphate from D-ribose 5-phosphate (route II): step 3/3. Functionally, catalyzes the phosphorylation of ribose 1,5-bisphosphate to 5-phospho-D-ribosyl alpha-1-diphosphate (PRPP). This is Ribose 1,5-bisphosphate phosphokinase PhnN from Desulfomicrobium baculatum (strain DSM 4028 / VKM B-1378 / X) (Desulfovibrio baculatus).